We begin with the raw amino-acid sequence, 409 residues long: Rho-GTPase-activating protein BAG7 (409 aa).

Residues 1–26 (MFNMNLLSTPSSEEGSPQNRSSSMSS) are compositionally biased toward polar residues. The disordered stretch occupies residues 1–32 (MFNMNLLSTPSSEEGSPQNRSSSMSSVEGKKD). One can recognise a Rho-GAP domain in the interval 50–257 (VSLEESLKVA…FLILHASDII (208 aa)). Residues 362–409 (KLLGNVGNSSNTGIKDPTERVPRGEHKTKHKQRQSWLRRLTSPSRTQP) form a disordered region. A compositionally biased stretch (basic and acidic residues) spans 377–386 (DPTERVPRGE).

Interacts with RHO1.

Acts in signal transduction. Activates RHO1. This is Rho-GTPase-activating protein BAG7 (BAG7) from Saccharomyces cerevisiae (strain ATCC 204508 / S288c) (Baker's yeast).